The following is a 502-amino-acid chain: Probable cytosol aminopeptidase (502 aa).

Mn(2+) contacts are provided by K269 and D274. K281 is a catalytic residue. Mn(2+) is bound by residues D292, D351, and E353. The active site involves R355.

The protein belongs to the peptidase M17 family. Mn(2+) is required as a cofactor.

Its subcellular location is the cytoplasm. It carries out the reaction Release of an N-terminal amino acid, Xaa-|-Yaa-, in which Xaa is preferably Leu, but may be other amino acids including Pro although not Arg or Lys, and Yaa may be Pro. Amino acid amides and methyl esters are also readily hydrolyzed, but rates on arylamides are exceedingly low.. The enzyme catalyses Release of an N-terminal amino acid, preferentially leucine, but not glutamic or aspartic acids.. Functionally, presumably involved in the processing and regular turnover of intracellular proteins. Catalyzes the removal of unsubstituted N-terminal amino acids from various peptides. This Vibrio vulnificus (strain CMCP6) protein is Probable cytosol aminopeptidase.